We begin with the raw amino-acid sequence, 3459 residues long: uncharacterized protein (3459 aa).

A compositionally biased stretch (acidic residues) spans 158-167 (NDDDWIFNED). Disordered regions lie at residues 158–230 (NDDD…NNNN) and 400–447 (YGYI…NDEK). A compositionally biased stretch (basic and acidic residues) spans 168–184 (DEKKNKNNDGNDNRYDY). Residues 185 to 201 (NDLQNNNNNDNNKYDYN) show a composition bias toward low complexity. Residues 204–221 (DDEKKNKNNDGDDNKYDY) are compositionally biased toward basic and acidic residues. A compositionally biased stretch (acidic residues) spans 406–443 (DNDDGDDYNDDNDNDDNYNDDNYNDDNYNDDNYNDDNY). Residues 771 to 851 (VNEKKKGENE…NEMNKDEENE (81 aa)) adopt a coiled-coil conformation. A helical transmembrane segment spans residues 1059-1079 (LIYMIYLFFTYKKYDLLLMFI). Disordered stretches follow at residues 1148–1187 (RRQE…NDYD), 1399–1467 (IPTQ…NDDD), and 1711–1733 (QKKK…NKEN). Residues 1404-1463 (DKNETDEGNKNETDEGDKNETDEGDKNETDEGNKNETEEIYKNETDEGNKNETEEIYKND) show a composition bias toward basic and acidic residues. 2 helical membrane-spanning segments follow: residues 2059–2079 (FLLF…IFFF) and 2197–2217 (IIQC…DFLF). Disordered stretches follow at residues 2582 to 2644 (IYKD…DNNN) and 2776 to 2835 (GRIW…DKGD). The span at 2592–2629 (DNNDDDNINDDDNINDDDNINDDDNNNDDDNNNDDNND) shows a compositional bias: acidic residues. Over residues 2779 to 2821 (WKREENGEKKKNEKNESEKNERNEKNEKNEKHEKHEKHEKNEK) the composition is skewed to basic and acidic residues. Residues 2785-2820 (GEKKKNEKNESEKNERNEKNEKNEKHEKHEKHEKNE) are a coiled coil. The next 2 helical transmembrane spans lie at 3229–3249 (LFII…SFIL) and 3296–3316 (LLFF…NINS).

The protein resides in the membrane. This is an uncharacterized protein from Plasmodium falciparum (isolate 3D7).